A 5085-amino-acid chain; its full sequence is Linear gramicidin synthase subunit D (5085 aa).

Carrier domains follow at residues 962–1037 (APRT…AAAG), 2023–2097 (SPST…EEKA), 3544–3619 (APRN…ELLT), and 4601–4676 (APQT…EEII). Residues Ser997, Ser2058, Ser3579, and Ser4636 each carry the O-(pantetheine 4'-phosphoryl)serine modification.

Belongs to the ATP-dependent AMP-binding enzyme family. Large multienzyme complex composed of 4 subunits; LgrA, LgrB, LgrC and LgrD. Pantetheine 4'-phosphate is required as a cofactor.

Activates the 13th to the 16th (Trp, D-Leu, Trp and Gly) amino acids in linear gramicidin and catalyzes the formation of the peptide bond between them. This enzyme is also responsible for the epimerization of the 14th (D-Leu) amino acid. It also catalyzes the NAD(P)H-dependent reduction of the C-terminal glycine residue of the N-formylated 16-mer peptide, that binds to the peptidyl carrier domain of the terminal module of this protein, to form a peptidyl-aldehyde intermediate that is released from the enzyme complex. The protein is Linear gramicidin synthase subunit D (lgrD) of Brevibacillus parabrevis.